Consider the following 432-residue polypeptide: Putative D-alanyl-D-alanine carboxypeptidase (432 aa).

Residues 7–25 (ATVLLTFSLSAFAVEYPVL) traverse the membrane as a helical; Signal-anchor segment.

This sequence belongs to the peptidase S12 family. YfeW subfamily.

It is found in the cell inner membrane. It carries out the reaction Preferential cleavage: (Ac)2-L-Lys-D-Ala-|-D-Ala. Also transpeptidation of peptidyl-alanyl moieties that are N-acyl substituents of D-alanine.. The polypeptide is Putative D-alanyl-D-alanine carboxypeptidase (Salmonella heidelberg (strain SL476)).